We begin with the raw amino-acid sequence, 248 residues long: 3-deoxy-manno-octulosonate cytidylyltransferase (248 aa).

This sequence belongs to the KdsB family.

The protein localises to the cytoplasm. It carries out the reaction 3-deoxy-alpha-D-manno-oct-2-ulosonate + CTP = CMP-3-deoxy-beta-D-manno-octulosonate + diphosphate. It functions in the pathway nucleotide-sugar biosynthesis; CMP-3-deoxy-D-manno-octulosonate biosynthesis; CMP-3-deoxy-D-manno-octulosonate from 3-deoxy-D-manno-octulosonate and CTP: step 1/1. It participates in bacterial outer membrane biogenesis; lipopolysaccharide biosynthesis. In terms of biological role, activates KDO (a required 8-carbon sugar) for incorporation into bacterial lipopolysaccharide in Gram-negative bacteria. The sequence is that of 3-deoxy-manno-octulosonate cytidylyltransferase from Klebsiella pneumoniae subsp. pneumoniae (strain ATCC 700721 / MGH 78578).